The chain runs to 626 residues: Endo-1,3(4)-beta-glucanase xgeA (626 aa).

Residues 1-25 (MSSSLMRRVGSLAASAIIFPGIAHA) form the signal peptide. The region spanning 33–286 (ESWEGEKILN…WAGGVFGDSG (254 aa)) is the GH16 domain. An N-linked (GlcNAc...) asparagine glycan is attached at Asn61. Glu142 functions as the Nucleophile in the catalytic mechanism. The Proton donor role is filled by Glu147. Over residues 477 to 494 (ASTDAAAATTPAAEPHPS) the composition is skewed to low complexity. The disordered stretch occupies residues 477–533 (ASTDAAAATTPAAEPHPSNAETPADSKSSADAVTAQATKTTIAVNTPNPATDSASSV). The segment covering 495–533 (NAETPADSKSSADAVTAQATKTTIAVNTPNPATDSASSV) has biased composition (polar residues). Gly603 carries the GPI-anchor amidated glycine lipid modification. The propeptide at 604–626 (VGSKVSISASVAIAAFVMLLLVN) is removed in mature form.

This sequence belongs to the glycosyl hydrolase 16 family.

It localises to the cell membrane. It catalyses the reaction Endohydrolysis of (1-&gt;3)- or (1-&gt;4)-linkages in beta-D-glucans when the glucose residue whose reducing group is involved in the linkage to be hydrolyzed is itself substituted at C-3.. Its function is as follows. Mixed-linked glucanase involved in the degradation of complex natural cellulosic substrates. Active on laminarin. lichenan, soluble carboxymethyl cellulose but not on pustulan. This is Endo-1,3(4)-beta-glucanase xgeA (xgeA) from Emericella nidulans (strain FGSC A4 / ATCC 38163 / CBS 112.46 / NRRL 194 / M139) (Aspergillus nidulans).